The chain runs to 51 residues: UPF0181 protein VVA0806 (51 aa).

This sequence belongs to the UPF0181 family.

This is UPF0181 protein VVA0806 from Vibrio vulnificus (strain YJ016).